We begin with the raw amino-acid sequence, 385 residues long: tRNA-specific 2-thiouridylase MnmA (385 aa).

ATP-binding positions include 30–37 (GMSGGVDS) and methionine 56. The interval 118–120 (NPD) is interaction with target base in tRNA. Cysteine 123 functions as the Nucleophile in the catalytic mechanism. A disulfide bridge links cysteine 123 with cysteine 220. Glycine 148 lines the ATP pocket. Residues 170–172 (KDQ) form an interaction with tRNA region. The active-site Cysteine persulfide intermediate is cysteine 220. Residues 332-333 (RY) form an interaction with tRNA region.

Belongs to the MnmA/TRMU family.

Its subcellular location is the cytoplasm. It catalyses the reaction S-sulfanyl-L-cysteinyl-[protein] + uridine(34) in tRNA + AH2 + ATP = 2-thiouridine(34) in tRNA + L-cysteinyl-[protein] + A + AMP + diphosphate + H(+). Functionally, catalyzes the 2-thiolation of uridine at the wobble position (U34) of tRNA, leading to the formation of s(2)U34. This Haemophilus influenzae (strain PittGG) protein is tRNA-specific 2-thiouridylase MnmA.